The chain runs to 331 residues: Homeobox protein DBX1 (331 aa).

Disordered regions lie at residues 56-94 (RAVPPPSMSPPTSESPNCMSETSDLARREGPNQTSISSN) and 232-331 (KERE…ITVS). The homeobox DNA-binding region spans 173–232 (GMLRRAVFSDVQRKALEKMFQKQKYISKPDRKKLAGKLGLKDSQVKIWFQNRRMKWRNSK). Basic and acidic residues predominate over residues 256 to 266 (DLSDVSKKSSG). Residues 299 to 314 (PSSPFNSSSASKPSDF) are compositionally biased toward low complexity. Residues 315-331 (SDSEEEGGEQEEEITVS) are compositionally biased toward acidic residues.

It belongs to the H2.0 homeobox family.

The protein localises to the nucleus. Its function is as follows. May function within the midpoint progenitor population to inhibit neuronal differentiation, possibly through modulating the function of Xash3. The polypeptide is Homeobox protein DBX1 (dbx1) (Xenopus laevis (African clawed frog)).